Reading from the N-terminus, the 76-residue chain is Virulence-associated protein VagC (76 aa).

One can recognise a SpoVT-AbrB domain in the interval 4-45 (VSIFKNGNNRAIRLPRDLDFEGVSELEIVREGDSIILRPVRP).

This sequence belongs to the VapB family.

The chain is Virulence-associated protein VagC (vagC) from Salmonella dublin.